We begin with the raw amino-acid sequence, 113 residues long: rRNA-processing protein cgrA (113 aa).

The segment covering 1-15 (MSTITTSSVASSNGM) has biased composition (polar residues). The interval 1–113 (MSTITTSSVA…REKRNKLLHS (113 aa)) is disordered. Positions 37-100 (SYEKRLEARK…EKMHRKRVER (64 aa)) form a coiled coil. The segment covering 38 to 92 (YEKRLEARKLQEAVKEHEREMREEREAERKAQIQKIKDRRAAKEEKERYEKMAEK) has biased composition (basic and acidic residues). Basic residues predominate over residues 93 to 113 (MHRKRVERLKRREKRNKLLHS).

It belongs to the CGR1 family.

The protein resides in the nucleus. It is found in the nucleolus. In terms of biological role, involved in nucleolar integrity and required for processing of the pre-rRNA for the 60S ribosome subunit. In Aspergillus clavatus (strain ATCC 1007 / CBS 513.65 / DSM 816 / NCTC 3887 / NRRL 1 / QM 1276 / 107), this protein is rRNA-processing protein cgrA (cgrA).